We begin with the raw amino-acid sequence, 234 residues long: Ribosomal RNA small subunit methyltransferase G (234 aa).

The S-adenosyl-L-methionine site is built by G85, F90, and R155.

The protein belongs to the methyltransferase superfamily. RNA methyltransferase RsmG family.

It is found in the cytoplasm. The catalysed reaction is guanosine(527) in 16S rRNA + S-adenosyl-L-methionine = N(7)-methylguanosine(527) in 16S rRNA + S-adenosyl-L-homocysteine. Functionally, specifically methylates the N7 position of guanine in position 527 of 16S rRNA. The sequence is that of Ribosomal RNA small subunit methyltransferase G from Rhodopseudomonas palustris (strain BisB18).